A 178-amino-acid polypeptide reads, in one-letter code: Bryoporin (178 aa).

Residues serine 51, valine 83, serine 102, proline 104, and tyrosine 134 each coordinate phosphocholine. Positions tryptophan 101 to alanine 117 are trp-rich region.

The protein belongs to the actinoporin family. Plant subfamily.

Its activity is regulated as follows. Inhibited by sphingomyelin. Its function is as follows. Actinoporin-related protein having hemolytic activity in vitro. Binds probably a phosphocholine derivative with the unique amido or hydroxyl groups found in sphingomyelin. Involved in drought tolerance. The protein is Bryoporin of Physcomitrium patens (Spreading-leaved earth moss).